A 463-amino-acid polypeptide reads, in one-letter code: SPARC-related modular calcium-binding protein 1 (463 aa).

The N-terminal stretch at 1–25 (MLPARVRLLTPHLLLVLVQLSPAGG) is a signal peptide. One can recognise a Kazal-like domain in the interval 36-88 (SDRDPPCNPHCPRTQPKPICASDGRSYESMCEYQRAKCRDPALAVVHRGRCKD). Cystine bridges form between Cys-42–Cys-73, Cys-46–Cys-66, Cys-55–Cys-86, Cys-94–Cys-117, Cys-128–Cys-135, and Cys-137–Cys-157. The 67-residue stretch at 91 to 157 (QSKCRLERAQ…SSVQNKTPVC (67 aa)) folds into the Thyroglobulin type-1 1 domain. Residue Asn-224 is glycosylated (N-linked (GlcNAc...) asparagine). In terms of domain architecture, Thyroglobulin type-1 2 spans 234–302 (VHSCDQERQS…TSTRYVMPSC (69 aa)). Intrachain disulfides connect Cys-237-Cys-261, Cys-272-Cys-279, and Cys-281-Cys-302. 2 consecutive EF-hand domains span residues 369–404 (LEER…VKKK) and 406–441 (KPKK…SKEG). Residues Asp-382, Asn-384, Ser-386, Asp-388, Glu-393, Asp-419, Asn-421, Asp-423, and Glu-430 each coordinate Ca(2+). Asn-384 carries an N-linked (GlcNAc...) asparagine glycan.

Glycosylated. Widely expressed in many tissues with a strongest signal in ovary.

It localises to the secreted. The protein resides in the extracellular space. It is found in the extracellular matrix. Its subcellular location is the basement membrane. Probable regulator of osteoblast differentiation. Plays essential roles in both eye and limb development. This Mus musculus (Mouse) protein is SPARC-related modular calcium-binding protein 1 (Smoc1).